We begin with the raw amino-acid sequence, 72 residues long: NAD(P)H-quinone oxidoreductase subunit O (72 aa).

Belongs to the complex I NdhO subunit family. NDH-1 can be composed of about 15 different subunits; different subcomplexes with different compositions have been identified which probably have different functions.

Its subcellular location is the cellular thylakoid membrane. It catalyses the reaction a plastoquinone + NADH + (n+1) H(+)(in) = a plastoquinol + NAD(+) + n H(+)(out). The enzyme catalyses a plastoquinone + NADPH + (n+1) H(+)(in) = a plastoquinol + NADP(+) + n H(+)(out). Functionally, NDH-1 shuttles electrons from an unknown electron donor, via FMN and iron-sulfur (Fe-S) centers, to quinones in the respiratory and/or the photosynthetic chain. The immediate electron acceptor for the enzyme in this species is believed to be plastoquinone. Couples the redox reaction to proton translocation, and thus conserves the redox energy in a proton gradient. Cyanobacterial NDH-1 also plays a role in inorganic carbon-concentration. This is NAD(P)H-quinone oxidoreductase subunit O from Synechococcus elongatus (strain ATCC 33912 / PCC 7942 / FACHB-805) (Anacystis nidulans R2).